The sequence spans 423 residues: Imidazolonepropionase (423 aa).

Fe(3+) is bound by residues His78 and His80. Zn(2+)-binding residues include His78 and His80. Positions 87, 150, and 183 each coordinate 4-imidazolone-5-propanoate. Tyr150 is a binding site for N-formimidoyl-L-glutamate. His247 contacts Fe(3+). A Zn(2+)-binding site is contributed by His247. 4-imidazolone-5-propanoate is bound at residue Glu250. Residue Asp322 coordinates Fe(3+). A Zn(2+)-binding site is contributed by Asp322. Asn324 and Gly326 together coordinate N-formimidoyl-L-glutamate. Ser327 is a 4-imidazolone-5-propanoate binding site.

It belongs to the metallo-dependent hydrolases superfamily. HutI family. Zn(2+) is required as a cofactor. The cofactor is Fe(3+).

The protein resides in the cytoplasm. It carries out the reaction 4-imidazolone-5-propanoate + H2O = N-formimidoyl-L-glutamate. It participates in amino-acid degradation; L-histidine degradation into L-glutamate; N-formimidoyl-L-glutamate from L-histidine: step 3/3. Its function is as follows. Catalyzes the hydrolytic cleavage of the carbon-nitrogen bond in imidazolone-5-propanoate to yield N-formimidoyl-L-glutamate. It is the third step in the universal histidine degradation pathway. The chain is Imidazolonepropionase from Bacillus cereus (strain ZK / E33L).